The chain runs to 361 residues: Chorismate synthase (361 aa).

NADP(+) contacts are provided by R48 and R54. FMN-binding positions include 125 to 127 (RSS), 238 to 239 (NA), G278, 293 to 297 (KPTSS), and R319.

Belongs to the chorismate synthase family. As to quaternary structure, homotetramer. It depends on FMNH2 as a cofactor.

It carries out the reaction 5-O-(1-carboxyvinyl)-3-phosphoshikimate = chorismate + phosphate. The protein operates within metabolic intermediate biosynthesis; chorismate biosynthesis; chorismate from D-erythrose 4-phosphate and phosphoenolpyruvate: step 7/7. Functionally, catalyzes the anti-1,4-elimination of the C-3 phosphate and the C-6 proR hydrogen from 5-enolpyruvylshikimate-3-phosphate (EPSP) to yield chorismate, which is the branch point compound that serves as the starting substrate for the three terminal pathways of aromatic amino acid biosynthesis. This reaction introduces a second double bond into the aromatic ring system. In Escherichia coli O1:K1 / APEC, this protein is Chorismate synthase.